The primary structure comprises 435 residues: Ribulose bisphosphate carboxylase large chain (435 aa).

Positions 104 and 154 each coordinate substrate. The Proton acceptor role is filled by lysine 156. Lysine 158 is a binding site for substrate. The Mg(2+) site is built by lysine 182, aspartate 184, and glutamate 185. Lysine 182 carries the N6-carboxylysine modification. The active-site Proton acceptor is the histidine 275. Substrate contacts are provided by arginine 276, histidine 308, and serine 360.

Belongs to the RuBisCO large chain family. Type I subfamily. In terms of assembly, heterohexadecamer of 8 large chains and 8 small chains. Mg(2+) serves as cofactor.

The protein localises to the plastid. It localises to the chloroplast. The catalysed reaction is 2 (2R)-3-phosphoglycerate + 2 H(+) = D-ribulose 1,5-bisphosphate + CO2 + H2O. It carries out the reaction D-ribulose 1,5-bisphosphate + O2 = 2-phosphoglycolate + (2R)-3-phosphoglycerate + 2 H(+). Functionally, ruBisCO catalyzes two reactions: the carboxylation of D-ribulose 1,5-bisphosphate, the primary event in carbon dioxide fixation, as well as the oxidative fragmentation of the pentose substrate in the photorespiration process. Both reactions occur simultaneously and in competition at the same active site. The chain is Ribulose bisphosphate carboxylase large chain from Euglena pisciformis.